Here is a 555-residue protein sequence, read N- to C-terminus: Dihydroxy-acid dehydratase (555 aa).

Asp78 is a Mg(2+) binding site. Cys119 contributes to the [2Fe-2S] cluster binding site. Mg(2+) contacts are provided by Asp120 and Lys121. An N6-carboxylysine modification is found at Lys121. Residue Cys195 participates in [2Fe-2S] cluster binding. Glu444 provides a ligand contact to Mg(2+). Ser470 acts as the Proton acceptor in catalysis.

This sequence belongs to the IlvD/Edd family. As to quaternary structure, homodimer. Requires [2Fe-2S] cluster as cofactor. It depends on Mg(2+) as a cofactor.

The enzyme catalyses (2R)-2,3-dihydroxy-3-methylbutanoate = 3-methyl-2-oxobutanoate + H2O. It carries out the reaction (2R,3R)-2,3-dihydroxy-3-methylpentanoate = (S)-3-methyl-2-oxopentanoate + H2O. It functions in the pathway amino-acid biosynthesis; L-isoleucine biosynthesis; L-isoleucine from 2-oxobutanoate: step 3/4. The protein operates within amino-acid biosynthesis; L-valine biosynthesis; L-valine from pyruvate: step 3/4. Functionally, functions in the biosynthesis of branched-chain amino acids. Catalyzes the dehydration of (2R,3R)-2,3-dihydroxy-3-methylpentanoate (2,3-dihydroxy-3-methylvalerate) into 2-oxo-3-methylpentanoate (2-oxo-3-methylvalerate) and of (2R)-2,3-dihydroxy-3-methylbutanoate (2,3-dihydroxyisovalerate) into 2-oxo-3-methylbutanoate (2-oxoisovalerate), the penultimate precursor to L-isoleucine and L-valine, respectively. This is Dihydroxy-acid dehydratase from Dehalococcoides mccartyi (strain ATCC BAA-2266 / KCTC 15142 / 195) (Dehalococcoides ethenogenes (strain 195)).